The sequence spans 335 residues: Glutaredoxin-3 (335 aa).

Ala-2 carries the post-translational modification N-acetylalanine. Residues 2–117 form the Thioredoxin domain; the sequence is AAGAAEAAVA…LTKKVQRHAS (116 aa). Residues Ser-117 and Ser-120 each carry the phosphoserine modification. 2 Glutaredoxin domains span residues 144–236 and 237–335; these read APCM…PKLE and ERLK…RGEN. Residues Cys-159 and Cys-261 each coordinate [2Fe-2S] cluster.

In terms of assembly, homodimer; the homodimer is independent of 2Fe-2S clusters. Heterotrimer; forms a heterotrimeric complex composed by two BOLA2 molecules and one GLRX3 molecule; linked by [2Fe-2S] clusters. Interacts (via N-terminus) with PRKCQ/PKC-theta. Interacts (via C-terminus) with CSRP3. Interacts with CSRP2. In terms of tissue distribution, expressed in heart, spleen, testis and, to a lower extent, in thymus and peripheral blood leukocytes. Weakly expressed in lung, placenta, colon and small intestine.

It is found in the cytoplasm. It localises to the cytosol. Its subcellular location is the cell cortex. The protein resides in the myofibril. The protein localises to the sarcomere. It is found in the z line. Its function is as follows. Together with BOLA2, acts as a cytosolic iron-sulfur (Fe-S) cluster assembly factor that facilitates [2Fe-2S] cluster insertion into a subset of cytosolic proteins. Acts as a critical negative regulator of cardiac hypertrophy and a positive inotropic regulator. Required for hemoglobin maturation. Does not possess any thyoredoxin activity since it lacks the conserved motif that is essential for catalytic activity. This is Glutaredoxin-3 (GLRX3) from Homo sapiens (Human).